Here is a 125-residue protein sequence, read N- to C-terminus: Small ribosomal subunit protein uS13 (125 aa).

The segment at 99 to 125 (RGQRTKTNARTRKGKRKTVANKKMAAK) is disordered.

The protein belongs to the universal ribosomal protein uS13 family. In terms of assembly, part of the 30S ribosomal subunit. Forms a loose heterodimer with protein S19. Forms two bridges to the 50S subunit in the 70S ribosome.

Functionally, located at the top of the head of the 30S subunit, it contacts several helices of the 16S rRNA. In the 70S ribosome it contacts the 23S rRNA (bridge B1a) and protein L5 of the 50S subunit (bridge B1b), connecting the 2 subunits; these bridges are implicated in subunit movement. Contacts the tRNAs in the A and P-sites. This is Small ribosomal subunit protein uS13 from Borrelia turicatae (strain 91E135).